A 78-amino-acid chain; its full sequence is D-alanyl carrier protein (78 aa).

Residues 1–78 (MAFRENVLEI…MIITQLEALK (78 aa)) form the Carrier domain. O-(pantetheine 4'-phosphoryl)serine is present on Ser36.

The protein belongs to the DltC family. Post-translationally, 4'-phosphopantetheine is transferred from CoA to a specific serine of apo-DCP.

The protein localises to the cytoplasm. Its pathway is cell wall biogenesis; lipoteichoic acid biosynthesis. Its function is as follows. Carrier protein involved in the D-alanylation of lipoteichoic acid (LTA). The loading of thioester-linked D-alanine onto DltC is catalyzed by D-alanine--D-alanyl carrier protein ligase DltA. The DltC-carried D-alanyl group is further transferred to cell membrane phosphatidylglycerol (PG) by forming an ester bond, probably catalyzed by DltD. D-alanylation of LTA plays an important role in modulating the properties of the cell wall in Gram-positive bacteria, influencing the net charge of the cell wall. This chain is D-alanyl carrier protein, found in Listeria innocua serovar 6a (strain ATCC BAA-680 / CLIP 11262).